A 411-amino-acid polypeptide reads, in one-letter code: Protein Rv3035 (411 aa).

This chain is Protein Rv3035, found in Mycobacterium tuberculosis (strain ATCC 25618 / H37Rv).